Reading from the N-terminus, the 236-residue chain is Urease accessory protein UreF (236 aa).

This sequence belongs to the UreF family. UreD, UreF and UreG form a complex that acts as a GTP-hydrolysis-dependent molecular chaperone, activating the urease apoprotein by helping to assemble the nickel containing metallocenter of UreC. The UreE protein probably delivers the nickel.

The protein localises to the cytoplasm. In terms of biological role, required for maturation of urease via the functional incorporation of the urease nickel metallocenter. This is Urease accessory protein UreF from Synechocystis sp. (strain ATCC 27184 / PCC 6803 / Kazusa).